The following is a 299-amino-acid chain: NAD kinase (299 aa).

The Proton acceptor role is filled by Asp-64. Residues 64–65, 138–139, Arg-149, Arg-166, Asp-168, 179–184, and Gln-238 each bind NAD(+); these read DG, ND, and TGYAVS.

It belongs to the NAD kinase family. A divalent metal cation serves as cofactor.

Its subcellular location is the cytoplasm. The enzyme catalyses NAD(+) + ATP = ADP + NADP(+) + H(+). In terms of biological role, involved in the regulation of the intracellular balance of NAD and NADP, and is a key enzyme in the biosynthesis of NADP. Catalyzes specifically the phosphorylation on 2'-hydroxyl of the adenosine moiety of NAD to yield NADP. This Nitratidesulfovibrio vulgaris (strain ATCC 29579 / DSM 644 / CCUG 34227 / NCIMB 8303 / VKM B-1760 / Hildenborough) (Desulfovibrio vulgaris) protein is NAD kinase.